Here is a 117-residue protein sequence, read N- to C-terminus: Ig heavy chain V region 1-72 (117 aa).

Residues 1 to 19 (MGWSCIMLFLAATATGVHS) form the signal peptide. The tract at residues 20–49 (QVQLQQPGAELVKPGASVKLSCKASGYTFT) is framework-1. Cysteines 41 and 115 form a disulfide. The complementarity-determining-1 stretch occupies residues 50 to 54 (SYWMH). Residues 55-68 (WVKQRPGRGLEWIG) form a framework-2 region. The complementarity-determining-2 stretch occupies residues 69 to 85 (RIDPNSGGTKYNEKFKS). Residues 86 to 117 (KATLTVDKPSSTAYMQLSSLTSEDSAVYYCAR) are framework-3.

The protein is Ig heavy chain V region 1-72 of Mus musculus (Mouse).